The sequence spans 179 residues: NADH-quinone oxidoreductase subunit I (179 aa).

2 4Fe-4S ferredoxin-type domains span residues 49–79 (LTRD…LQKG) and 89–118 (EFFR…LTPD). Positions 59, 62, 65, 69, 98, 101, 104, and 108 each coordinate [4Fe-4S] cluster.

This sequence belongs to the complex I 23 kDa subunit family. In terms of assembly, NDH-1 is composed of 14 different subunits. Subunits NuoA, H, J, K, L, M, N constitute the membrane sector of the complex. Requires [4Fe-4S] cluster as cofactor.

It localises to the cell inner membrane. It carries out the reaction a quinone + NADH + 5 H(+)(in) = a quinol + NAD(+) + 4 H(+)(out). NDH-1 shuttles electrons from NADH, via FMN and iron-sulfur (Fe-S) centers, to quinones in the respiratory chain. The immediate electron acceptor for the enzyme in this species is believed to be ubiquinone. Couples the redox reaction to proton translocation (for every two electrons transferred, four hydrogen ions are translocated across the cytoplasmic membrane), and thus conserves the redox energy in a proton gradient. This is NADH-quinone oxidoreductase subunit I from Chromohalobacter salexigens (strain ATCC BAA-138 / DSM 3043 / CIP 106854 / NCIMB 13768 / 1H11).